We begin with the raw amino-acid sequence, 229 residues long: uncharacterized protein (229 aa).

In terms of domain architecture, PilZ spans 102-217 (RRRTVRVEPD…REKVRRYVFE (116 aa)).

To A.aeolicus aq_820 and aq_1211.

This is an uncharacterized protein from Aquifex aeolicus (strain VF5).